The primary structure comprises 363 residues: MRIGVVIHGPEIIDSGYALKIINLLKKFGEVKAKLGGTMGRVAVIDNNLQDIIDISEKLMPSQSLKKLANNDILILMNYGKSKITGHTFGKIVVERANLNKPIIQIERPGEEDGTIIIWNDDNSKIVKEIANYLSKELNLKIEKCISNGLEVWEKEGRVFRKVHGVDVGEAILVNGIVVGKAKSNEVILIAENGKLVDIIGGELKEGGIEKLKNVDLKKAVIKTGILRRHPTNPKIESKEIDEGYTIIINHAGEDVIEMIKNKGVVAVITIGDDTTTICGDILARFGIKIIGITDGDRDEILKNPVILKGSVIFLIKNMRDDDVGRILEKNLNLNKKYCYQELLDEVKKIFNDNNICYEEFVY.

This is an uncharacterized protein from Methanocaldococcus jannaschii (strain ATCC 43067 / DSM 2661 / JAL-1 / JCM 10045 / NBRC 100440) (Methanococcus jannaschii).